A 400-amino-acid polypeptide reads, in one-letter code: Enoyl-[acyl-carrier-protein] reductase [NADH] 1 (400 aa).

NAD(+)-binding positions include 48-53, 74-75, 111-112, and 139-140; these read GSSSGY, FE, DA, and LA. Tyr-225 contacts substrate. Tyr-235 acts as the Proton donor in catalysis. Residues Lys-244 and 273 to 275 each bind NAD(+); that span reads VVT.

The protein belongs to the TER reductase family. In terms of assembly, monomer.

It carries out the reaction a 2,3-saturated acyl-[ACP] + NAD(+) = a (2E)-enoyl-[ACP] + NADH + H(+). Its pathway is lipid metabolism; fatty acid biosynthesis. In terms of biological role, involved in the final reduction of the elongation cycle of fatty acid synthesis (FAS II). Catalyzes the reduction of a carbon-carbon double bond in an enoyl moiety that is covalently linked to an acyl carrier protein (ACP). This is Enoyl-[acyl-carrier-protein] reductase [NADH] 1 from Photobacterium profundum (strain SS9).